Reading from the N-terminus, the 505-residue chain is ATP synthase subunit alpha, chloroplastic (505 aa).

Residue 170–177 coordinates ATP; that stretch reads GDRQTGKT.

The protein belongs to the ATPase alpha/beta chains family. F-type ATPases have 2 components, CF(1) - the catalytic core - and CF(0) - the membrane proton channel. CF(1) has five subunits: alpha(3), beta(3), gamma(1), delta(1), epsilon(1). CF(0) has four main subunits: a, b, b' and c.

It is found in the plastid. The protein resides in the chloroplast thylakoid membrane. The enzyme catalyses ATP + H2O + 4 H(+)(in) = ADP + phosphate + 5 H(+)(out). Functionally, produces ATP from ADP in the presence of a proton gradient across the membrane. The alpha chain is a regulatory subunit. The chain is ATP synthase subunit alpha, chloroplastic from Oenothera elata subsp. hookeri (Hooker's evening primrose).